The primary structure comprises 416 residues: CinA-like protein (416 aa).

The protein belongs to the CinA family.

The chain is CinA-like protein from Solibacter usitatus (strain Ellin6076).